Here is a 190-residue protein sequence, read N- to C-terminus: Threonylcarbamoyl-AMP synthase (190 aa).

Positions 7-190 constitute a YrdC-like domain; sequence SEAVAHAVAV…ALTGELFRQG (184 aa).

The protein belongs to the SUA5 family. TsaC subfamily.

It localises to the cytoplasm. The catalysed reaction is L-threonine + hydrogencarbonate + ATP = L-threonylcarbamoyladenylate + diphosphate + H2O. In terms of biological role, required for the formation of a threonylcarbamoyl group on adenosine at position 37 (t(6)A37) in tRNAs that read codons beginning with adenine. Catalyzes the conversion of L-threonine, HCO(3)(-)/CO(2) and ATP to give threonylcarbamoyl-AMP (TC-AMP) as the acyladenylate intermediate, with the release of diphosphate. This is Threonylcarbamoyl-AMP synthase from Klebsiella pneumoniae subsp. pneumoniae (strain ATCC 700721 / MGH 78578).